A 173-amino-acid polypeptide reads, in one-letter code: Translation initiation factor IF-3 (173 aa).

Belongs to the IF-3 family. Monomer.

The protein resides in the cytoplasm. Functionally, IF-3 binds to the 30S ribosomal subunit and shifts the equilibrium between 70S ribosomes and their 50S and 30S subunits in favor of the free subunits, thus enhancing the availability of 30S subunits on which protein synthesis initiation begins. The polypeptide is Translation initiation factor IF-3 (Enterococcus faecalis (strain ATCC 700802 / V583)).